The sequence spans 152 residues: SKP1-like protein 8 (152 aa).

Residues 94-152 (TNAANFLNNKSLLHLAGQTVADMIKGNTPKQMREFFNIENDLTPEEEAAIRRENKWAFE) are interaction with the F-box domain of F-box proteins.

It belongs to the SKP1 family. As to quaternary structure, part of a SCF (SKP1-cullin-F-box) protein ligase complex. As to expression, restricted to siliques.

It is found in the nucleus. The protein operates within protein modification; protein ubiquitination. In terms of biological role, involved in ubiquitination and subsequent proteasomal degradation of target proteins. Together with CUL1, RBX1 and a F-box protein, it forms a SCF E3 ubiquitin ligase complex. The functional specificity of this complex depends on the type of F-box protein. In the SCF complex, it serves as an adapter that links the F-box protein to CUL1. This chain is SKP1-like protein 8 (ASK8), found in Arabidopsis thaliana (Mouse-ear cress).